Here is a 207-residue protein sequence, read N- to C-terminus: LexA repressor (207 aa).

Positions 28–48 form a DNA-binding region, H-T-H motif; that stretch reads VREIGEAVGLASSSTVHGHLA. Active-site for autocatalytic cleavage activity residues include S129 and K167.

This sequence belongs to the peptidase S24 family. Homodimer.

The catalysed reaction is Hydrolysis of Ala-|-Gly bond in repressor LexA.. Its function is as follows. Represses a number of genes involved in the response to DNA damage (SOS response), including recA and lexA. In the presence of single-stranded DNA, RecA interacts with LexA causing an autocatalytic cleavage which disrupts the DNA-binding part of LexA, leading to derepression of the SOS regulon and eventually DNA repair. The chain is LexA repressor from Geobacillus thermodenitrificans (strain NG80-2).